The following is a 622-amino-acid chain: Low affinity potassium transport system protein Kup (622 aa).

Transmembrane regions (helical) follow at residues leucine 9–leucine 29, valine 49–leucine 69, valine 103–isoleucine 123, proline 137–isoleucine 157, valine 165–leucine 185, valine 213–alanine 233, tryptophan 247–leucine 267, proline 276–alanine 296, isoleucine 337–phenylalanine 357, leucine 363–threonine 383, phenylalanine 396–leucine 416, and leucine 419–threonine 439.

It belongs to the HAK/KUP transporter (TC 2.A.72) family.

The protein resides in the cell inner membrane. It catalyses the reaction K(+)(in) + H(+)(in) = K(+)(out) + H(+)(out). In terms of biological role, responsible for the low-affinity transport of potassium into the cell. Likely operates as a K(+):H(+) symporter. The sequence is that of Low affinity potassium transport system protein Kup from Escherichia coli O6:K15:H31 (strain 536 / UPEC).